We begin with the raw amino-acid sequence, 2302 residues long: Phosphatidylinositol phosphatase PTPRQ (2302 aa).

A signal peptide spans 1–18 (MMDFHFSFLFLLIGTSES). The Extracellular portion of the chain corresponds to 19–1908 (QVDVSSSFDG…GEGLSERTVE (1890 aa)). An N-linked (GlcNAc...) asparagine glycan is attached at Asn54. Fibronectin type-III domains follow at residues 60–155 (PPVF…TAES), 159–254 (KVVN…SSST), 310–398 (PPQN…PPDV), 401–501 (AVFD…PHND), 474–566 (GFYE…TVRT), 570–665 (VPSS…TPED), 670–759 (SPQD…TSET), 764–854 (APEN…TEED), 859–948 (PPQN…TPEG), 953–1053 (PPND…TDQD), 1058–1151 (PVGN…TEED), 1156–1243 (PPII…TDES), 1248–1341 (PPQN…TQES), 1345–1431 (AVRN…LPET), 1435–1539 (APTN…TLPG), 1544–1642 (PPEN…TLES), and 1647–1748 (PPNN…IKAP). N-linked (GlcNAc...) asparagine glycans are attached at residues Asn162, Asn169, Asn318, Asn354, and Asn389. Residues Asn733 and Asn746 are each glycosylated (N-linked (GlcNAc...) asparagine). Asn904, Asn998, Asn1010, and Asn1040 each carry an N-linked (GlcNAc...) asparagine glycan. N-linked (GlcNAc...) asparagine glycans are attached at residues Asn1251 and Asn1256. Residue Asn1805 is glycosylated (N-linked (GlcNAc...) asparagine). Residues 1909–1929 (IILSVTLCILSIILLGTAIFA) traverse the membrane as a helical segment. Topologically, residues 1930 to 2302 (FVRIRQKQKE…VELEWEETTM (373 aa)) are cytoplasmic. The Tyrosine-protein phosphatase domain occupies 2006-2262 (FQEEFSELPK…IFLHQCILDL (257 aa)). Cys2203 functions as the Phosphocysteine intermediate in the catalytic mechanism.

The protein belongs to the protein-tyrosine phosphatase family. Receptor class 2A subfamily. In terms of assembly, interacts with TPRN. TPRN, CLIC5 and PTPQR form concentric rings at the base of stereocilia and may form a complex.

The protein resides in the cell projection. It is found in the stereocilium. Its subcellular location is the apical cell membrane. The protein localises to the basal cell membrane. The enzyme catalyses a 1,2-diacyl-sn-glycero-3-phospho-(1D-myo-inositol-3,4,5-trisphosphate) + H2O = a 1,2-diacyl-sn-glycero-3-phospho-(1D-myo-inositol-4,5-bisphosphate) + phosphate. The catalysed reaction is a 1,2-diacyl-sn-glycero-3-phospho-(1D-myo-inositol-3,4,5-trisphosphate) + H2O = a 1,2-diacyl-sn-glycero-3-phospho-(1D-myo-inositol-3,4-bisphosphate) + phosphate. It catalyses the reaction a 1,2-diacyl-sn-glycero-3-phospho-(1D-myo-inositol-3,5-bisphosphate) + H2O = a 1,2-diacyl-sn-glycero-3-phospho-(1D-myo-inositol-5-phosphate) + phosphate. It carries out the reaction a 1,2-diacyl-sn-glycero-3-phospho-(1D-myo-inositol-3,5-bisphosphate) + H2O = a 1,2-diacyl-sn-glycero-3-phospho-(1D-myo-inositol-3-phosphate) + phosphate. The enzyme catalyses a 1,2-diacyl-sn-glycero-3-phospho-(1D-myo-inositol-4,5-bisphosphate) + H2O = a 1,2-diacyl-sn-glycero-3-phospho-(1D-myo-inositol 4-phosphate) + phosphate. Its function is as follows. Dephosphorylates phosphatidylinositol phosphates, such as phosphatidylinositol 3,4,5-trisphosphate (PIP3) and phosphatidylinositol 3,5-diphosphates, with preference for PIP3. Phosphate can be hydrolyzed from the D3 and D5 positions in the inositol ring. Has low tyrosine-protein phosphatase activity in vitro; however, the relevance of such activity in vivo is unclear. Plays an important role in adipogenesis of mesenchymal stem cells (MSCs). Regulates the phosphorylation state of AKT1 by regulating the levels of PIP3 level in MSCs and preadipocyte cells. Required for hair bundle maturation, a process that enables hair cells to detect and transmit sound and balance signals effectively, therefore affecting auditory function. May act by regulating the level of phosphatidylinositol 4,5-bisphosphate (PIP2) level in the basal region of hair bundles. This Rattus norvegicus (Rat) protein is Phosphatidylinositol phosphatase PTPRQ (Ptprq).